The following is a 69-amino-acid chain: MSVLTPLLLRGLTGSARRLPVLRAQVHSKPPREKLGTMDVAIGLTSCFVCFLLPSGWVLSHLETYKKRE.

The N-terminal 25 residues, 1-25 (MSVLTPLLLRGLTGSARRLPVLRAQ), are a transit peptide targeting the mitochondrion. An SIFI-degron motif is present at residues 2–19 (SVLTPLLLRGLTGSARRL). Over 26–36 (VHSKPPREKLG) the chain is Mitochondrial matrix. The chain crosses the membrane as a helical span at residues 37-60 (TMDVAIGLTSCFVCFLLPSGWVLS). Topologically, residues 61–69 (HLETYKKRE) are mitochondrial intermembrane.

The protein belongs to the cytochrome c oxidase VIII family. Component of the cytochrome c oxidase (complex IV, CIV), a multisubunit enzyme composed of 14 subunits. The complex is composed of a catalytic core of 3 subunits MT-CO1, MT-CO2 and MT-CO3, encoded in the mitochondrial DNA, and 11 supernumerary subunits COX4I, COX5A, COX5B, COX6A, COX6B, COX6C, COX7A, COX7B, COX7C, COX8 and NDUFA4, which are encoded in the nuclear genome. The complex exists as a monomer or a dimer and forms supercomplexes (SCs) in the inner mitochondrial membrane with NADH-ubiquinone oxidoreductase (complex I, CI) and ubiquinol-cytochrome c oxidoreductase (cytochrome b-c1 complex, complex III, CIII), resulting in different assemblies (supercomplex SCI(1)III(2)IV(1) and megacomplex MCI(2)III(2)IV(2)). Post-translationally, in response to mitochondrial stress, the precursor protein is ubiquitinated by the SIFI complex in the cytoplasm before mitochondrial import, leading to its degradation. Within the SIFI complex, UBR4 initiates ubiquitin chain that are further elongated or branched by KCMF1.

The protein resides in the mitochondrion inner membrane. It functions in the pathway energy metabolism; oxidative phosphorylation. Component of the cytochrome c oxidase, the last enzyme in the mitochondrial electron transport chain which drives oxidative phosphorylation. The respiratory chain contains 3 multisubunit complexes succinate dehydrogenase (complex II, CII), ubiquinol-cytochrome c oxidoreductase (cytochrome b-c1 complex, complex III, CIII) and cytochrome c oxidase (complex IV, CIV), that cooperate to transfer electrons derived from NADH and succinate to molecular oxygen, creating an electrochemical gradient over the inner membrane that drives transmembrane transport and the ATP synthase. Cytochrome c oxidase is the component of the respiratory chain that catalyzes the reduction of oxygen to water. Electrons originating from reduced cytochrome c in the intermembrane space (IMS) are transferred via the dinuclear copper A center (CU(A)) of subunit 2 and heme A of subunit 1 to the active site in subunit 1, a binuclear center (BNC) formed by heme A3 and copper B (CU(B)). The BNC reduces molecular oxygen to 2 water molecules using 4 electrons from cytochrome c in the IMS and 4 protons from the mitochondrial matrix. This chain is Cytochrome c oxidase subunit 8A, mitochondrial (COX8A), found in Eulemur fulvus fulvus (Brown lemur).